The chain runs to 67 residues: Medusin-H1 (67 aa).

A signal peptide spans 1 to 22 (MDFLKKSLFLVLFLGFFSLSIC). A propeptide spanning residues 23-48 (EEEKRETEEKENEQEDDREERREEKR) is cleaved from the precursor. Positions 24 to 46 (EEKRETEEKENEQEDDREERREE) are disordered. Over residues 31 to 40 (EKENEQEDDR) the composition is skewed to acidic residues. At L66 the chain carries Leucine amide.

This sequence belongs to the frog skin active peptide (FSAP) family. Medusin subfamily. In terms of tissue distribution, expressed by the skin glands.

Its subcellular location is the secreted. Antimicrobial peptide with activity against Gram-positive bacteria (S.aureus, MIC=32 mg/L) and fungi (C.albicans, MIC=128 mg/L). Shows weak hemolytic activity. The protein is Medusin-H1 of Pithecopus hypochondrialis (Orange-legged leaf frog).